The primary structure comprises 955 residues: 2-oxoglutarate dehydrogenase E1 component (955 aa).

Belongs to the alpha-ketoglutarate dehydrogenase family. In terms of assembly, homodimer. Part of the 2-oxoglutarate dehydrogenase (OGDH) complex composed of E1 (2-oxoglutarate dehydrogenase), E2 (dihydrolipoamide succinyltransferase) and E3 (dihydrolipoamide dehydrogenase); the complex contains multiple copies of the three enzymatic components (E1, E2 and E3). Requires thiamine diphosphate as cofactor.

The catalysed reaction is N(6)-[(R)-lipoyl]-L-lysyl-[protein] + 2-oxoglutarate + H(+) = N(6)-[(R)-S(8)-succinyldihydrolipoyl]-L-lysyl-[protein] + CO2. In terms of biological role, E1 component of the 2-oxoglutarate dehydrogenase (OGDH) complex which catalyzes the decarboxylation of 2-oxoglutarate, the first step in the conversion of 2-oxoglutarate to succinyl-CoA and CO(2). This Bacillus cereus (strain ZK / E33L) protein is 2-oxoglutarate dehydrogenase E1 component.